We begin with the raw amino-acid sequence, 179 residues long: Adenine phosphoribosyltransferase (179 aa).

It belongs to the purine/pyrimidine phosphoribosyltransferase family. Homodimer.

The protein resides in the cytoplasm. It catalyses the reaction AMP + diphosphate = 5-phospho-alpha-D-ribose 1-diphosphate + adenine. It functions in the pathway purine metabolism; AMP biosynthesis via salvage pathway; AMP from adenine: step 1/1. In terms of biological role, catalyzes a salvage reaction resulting in the formation of AMP, that is energically less costly than de novo synthesis. The protein is Adenine phosphoribosyltransferase of Mycolicibacterium gilvum (strain PYR-GCK) (Mycobacterium gilvum (strain PYR-GCK)).